The primary structure comprises 745 residues: Myeloperoxidase (745 aa).

Residues 1–48 (MGVPFFSSLRCMVDLGPCWAGGLTAEMKLLLALAGLLAILATPQPSEG) form the signal peptide. N-linked (GlcNAc...) asparagine glycosylation is present at N139. Cysteines 167 and 180 form a disulfide. D260 contacts heme b. H261 (proton acceptor) is an active-site residue. Residue D262 participates in Ca(2+) binding. 2 disulfide bridges follow: C281-C291 and C285-C309. Cysteine sulfenic acid (-SOH) is present on C316. N323 is a glycosylation site (N-linked (GlcNAc...) asparagine). Ca(2+) is bound by residues T334, F336, D338, and S340. N-linked (GlcNAc...) asparagine glycosylation is found at N355 and N391. Residues C387 and C398 are joined by a disulfide bond. Positions 408 and 409 each coordinate heme b. An N-linked (GlcNAc...) asparagine glycan is attached at N483. A heme b-binding site is contributed by H502. 2 disulfide bridges follow: C606-C663 and C704-C730. N729 carries an N-linked (GlcNAc...) asparagine glycan.

This sequence belongs to the peroxidase family. XPO subfamily. As to quaternary structure, homodimer; disulfide-linked. Each monomer consists of a light and a heavy chain. Found in a complex with CP and LTF; interacts directly with CP, which protects CP antioxidant properties by MPO. Ca(2+) serves as cofactor. The cofactor is heme b.

The protein resides in the lysosome. The enzyme catalyses chloride + H2O2 + H(+) = hypochlorous acid + H2O. Part of the host defense system of polymorphonuclear leukocytes. It is responsible for microbicidal activity against a wide range of organisms. In the stimulated PMN, MPO catalyzes the production of hypohalous acids, primarily hypochlorous acid in physiologic situations, and other toxic intermediates that greatly enhance PMN microbicidal activity. Mediates the proteolytic cleavage of alpha-1-microglobulin to form t-alpha-1-microglobulin, which potently inhibits oxidation of low-density lipoprotein particles and limits vascular damage. The sequence is that of Myeloperoxidase from Homo sapiens (Human).